The primary structure comprises 294 residues: Probable 2-(5''-triphosphoribosyl)-3'-dephosphocoenzyme-A synthase (294 aa).

This sequence belongs to the CitG/MdcB family.

The enzyme catalyses 3'-dephospho-CoA + ATP = 2'-(5''-triphospho-alpha-D-ribosyl)-3'-dephospho-CoA + adenine. In Streptococcus equi subsp. zooepidemicus (strain MGCS10565), this protein is Probable 2-(5''-triphosphoribosyl)-3'-dephosphocoenzyme-A synthase.